Here is an 88-residue protein sequence, read N- to C-terminus: Large ribosomal subunit protein bL27 (88 aa).

The interval 1-21 (MAHKKGASSSRNGRDSAAQRL) is disordered.

It belongs to the bacterial ribosomal protein bL27 family.

The protein is Large ribosomal subunit protein bL27 of Mycobacterium marinum (strain ATCC BAA-535 / M).